Here is a 61-residue protein sequence, read N- to C-terminus: Small ribosomal subunit protein uS14 (61 aa).

Zn(2+)-binding residues include Cys-24, Cys-27, Cys-40, and Cys-43.

This sequence belongs to the universal ribosomal protein uS14 family. Zinc-binding uS14 subfamily. In terms of assembly, part of the 30S ribosomal subunit. Contacts proteins S3 and S10. The cofactor is Zn(2+).

In terms of biological role, binds 16S rRNA, required for the assembly of 30S particles and may also be responsible for determining the conformation of the 16S rRNA at the A site. This is Small ribosomal subunit protein uS14 from Helicobacter pylori (strain J99 / ATCC 700824) (Campylobacter pylori J99).